Here is a 382-residue protein sequence, read N- to C-terminus: Ustilagic acid biosynthesis cluster protein orf2 (382 aa).

The segment covering 1–20 (MLQEAKVSTHTSNPLSQSVP) has biased composition (polar residues). The interval 1–22 (MLQEAKVSTHTSNPLSQSVPQY) is disordered.

Its pathway is secondary metabolite biosynthesis. Its function is as follows. Part of the gene cluster that mediates the biosynthesis of the glycolipid biosurfactant ustilagic acid (UA). UA is a secreted cellobiose glycolipid that is toxic for many microorganisms and confers biocontrol activity to U.maydis. UA consists of 15,16-dihydroxypalmitic or 2,15,16-trihydroxypalmitic acid, which is O-glycosidically linked to cellobiose at its terminal hydroxyl group. In addition, the cellobiose moiety is acetylated and acylated with a short-chain hydroxy fatty acid. UA biosynthesis starts with omega-hydroxylation of palmitic acid catalyzed by the cytochrome P450 monooxygenase cyp1. Terminal hydroxylation of palmitic acid precedes subterminal hydroxylation catalyzed by the cytochrome P450 monooxygenase cyp2. Sequential glucosylation of the hydroxy fatty acid is probably catalyzed by the glycosyltransferase ugt1. The cellobiose lipid is further decorated by acetylation of the proximal glucose residue and by acylation with a short-chain beta-hydroxy fatty acid at the distal glucose residue. The acyltransferase uat1 may be a good candidate for catalyzing either acetylation or acylation of the cellobiose lipid. The fatty acid synthase fas2 may be involved in synthesis of the carbon backbone of the short-chain beta-hydroxy fatty acid esterified to the cellobiose disaccharide. The secreted UA consists of a mixture of both alpha-hydroxylated and non-hydroxylated glycolipids; therefore, alpha-hydroxylation of the long-chain fatty, catalyzed by the fatty acid hydroxylase ahd1, occurs late in UA biosynthesis and may be the last step before secretion. The protein is Ustilagic acid biosynthesis cluster protein orf2 of Mycosarcoma maydis (Corn smut fungus).